Consider the following 598-residue polypeptide: Thiol:disulfide interchange protein DsbD (598 aa).

A signal peptide spans 1–21 (MRALLTFFVAGLLVLSSPAMA). Cysteine 130 and cysteine 136 form a disulfide bridge. Positions 158–180 (TMPTQTASPLDTSTANTSTPQPL) are disordered. Polar residues predominate over residues 159–180 (MPTQTASPLDTSTANTSTPQPL). Helical transmembrane passes span 198–220 (LLFL…YPIL), 240–262 (LVYV…SAGL), 274–296 (LIGL…TLQL), 324–346 (AISG…LYVA), 353–375 (TGGV…VAVF), 385–407 (GWMD…FLLE), 414–431 (WSTA…GWLY), and 446–468 (AVGI…YWFA). A disulfide bridge links cysteine 212 with cysteine 333. Residues 456-598 (FASAQPALNY…FLEHIQRISN (143 aa)) enclose the Thioredoxin domain. The cysteines at positions 513 and 516 are disulfide-linked.

The protein belongs to the thioredoxin family. DsbD subfamily.

The protein resides in the cell inner membrane. The catalysed reaction is [protein]-dithiol + NAD(+) = [protein]-disulfide + NADH + H(+). The enzyme catalyses [protein]-dithiol + NADP(+) = [protein]-disulfide + NADPH + H(+). Required to facilitate the formation of correct disulfide bonds in some periplasmic proteins and for the assembly of the periplasmic c-type cytochromes. Acts by transferring electrons from cytoplasmic thioredoxin to the periplasm. This transfer involves a cascade of disulfide bond formation and reduction steps. This Vibrio vulnificus (strain YJ016) protein is Thiol:disulfide interchange protein DsbD.